The following is a 364-amino-acid chain: tRNA 2-selenouridine synthase (364 aa).

The Rhodanese domain occupies 14–137 (LLADTPLIDV…LRQTAIQATW (124 aa)). Residue C97 is the S-selanylcysteine intermediate of the active site.

The protein belongs to the SelU family. In terms of assembly, monomer.

It carries out the reaction 5-methylaminomethyl-2-thiouridine(34) in tRNA + selenophosphate + (2E)-geranyl diphosphate + H2O + H(+) = 5-methylaminomethyl-2-selenouridine(34) in tRNA + (2E)-thiogeraniol + phosphate + diphosphate. The catalysed reaction is 5-methylaminomethyl-2-thiouridine(34) in tRNA + (2E)-geranyl diphosphate = 5-methylaminomethyl-S-(2E)-geranyl-thiouridine(34) in tRNA + diphosphate. The enzyme catalyses 5-methylaminomethyl-S-(2E)-geranyl-thiouridine(34) in tRNA + selenophosphate + H(+) = 5-methylaminomethyl-2-(Se-phospho)selenouridine(34) in tRNA + (2E)-thiogeraniol. It catalyses the reaction 5-methylaminomethyl-2-(Se-phospho)selenouridine(34) in tRNA + H2O = 5-methylaminomethyl-2-selenouridine(34) in tRNA + phosphate. Functionally, involved in the post-transcriptional modification of the uridine at the wobble position (U34) of tRNA(Lys), tRNA(Glu) and tRNA(Gln). Catalyzes the conversion of 2-thiouridine (S2U-RNA) to 2-selenouridine (Se2U-RNA). Acts in a two-step process involving geranylation of 2-thiouridine (S2U) to S-geranyl-2-thiouridine (geS2U) and subsequent selenation of the latter derivative to 2-selenouridine (Se2U) in the tRNA chain. This chain is tRNA 2-selenouridine synthase, found in Salmonella heidelberg (strain SL476).